Reading from the N-terminus, the 948-residue chain is RNA polymerase-associated protein RapA (948 aa).

A Helicase ATP-binding domain is found at E164–N332. D177–T184 is an ATP binding site. The DEAH box motif lies at D278 to H281. One can recognise a Helicase C-terminal domain in the interval R473–H627.

The protein belongs to the SNF2/RAD54 helicase family. RapA subfamily. Interacts with the RNAP. Has a higher affinity for the core RNAP than for the holoenzyme. Its ATPase activity is stimulated by binding to RNAP.

Transcription regulator that activates transcription by stimulating RNA polymerase (RNAP) recycling in case of stress conditions such as supercoiled DNA or high salt concentrations. Probably acts by releasing the RNAP, when it is trapped or immobilized on tightly supercoiled DNA. Does not activate transcription on linear DNA. Probably not involved in DNA repair. The chain is RNA polymerase-associated protein RapA from Pseudomonas putida (strain ATCC 47054 / DSM 6125 / CFBP 8728 / NCIMB 11950 / KT2440).